The chain runs to 472 residues: Riboflavin transporter RibJ (472 aa).

The Cytoplasmic portion of the chain corresponds to 1 to 11 (MLPCFTRKPVD). The helical transmembrane segment at 12–32 (HPLGFLVALSGLLMQLMSYGI) threads the bilayer. Residues 33 to 58 (DNSYSIFSDDMHKDPSLGYPSVTTIS) are Extracellular-facing. Residues 59–79 (LGNSVSLGLSPAFGVLCGFLV) traverse the membrane as a helical segment. The Cytoplasmic segment spans residues 80-85 (DRVPPR). A helical transmembrane segment spans residues 86 to 106 (LMMAVSTLMLFAGLWLSSTFA). Residues 107–108 (HN) are Extracellular-facing. Asparagine 108 carries an N-linked (GlcNAc...) asparagine glycan. The chain crosses the membrane as a helical span at residues 109-129 (VTAVTFSYCLLASISSACMLS). The Cytoplasmic portion of the chain corresponds to 130-144 (PGAAATSSWFNRYQG). The helical transmembrane segment at 145–165 (LAMGINFSGGGVGSAIIPSLA) threads the bilayer. Over 166 to 179 (GKWVVAYGWRKTFR) the chain is Extracellular. A helical transmembrane segment spans residues 180 to 196 (LMSAFCAIGVVATLLSA). Over 197 to 271 (RRAPPKKEEA…TMFSRAFLGN (75 aa)) the chain is Cytoplasmic. Positions 200–248 (PPKKEEAGPSEYDEGQERQEQGEEEQAHTDEENRNNNNSNGETTPARRG) are disordered. Over residues 214–233 (GQERQEQGEEEQAHTDEENR) the composition is skewed to basic and acidic residues. Residues 272–292 (FFCWLIFSWAFYSLIYVAVPY) traverse the membrane as a helical segment. At 293-315 (VSSMGKAGTVYADISPIPTDIAS) the chain is on the extracellular side. Residues 316-336 (TLFTFYGVFQIVGSILVGWLA) form a helical membrane-spanning segment. The Cytoplasmic portion of the chain corresponds to 337 to 341 (TGTTN). Residues 342-362 (EFAYVLCATIGGIFCAFLGFC) form a helical membrane-spanning segment. Residues 363-365 (RSY) lie on the Extracellular side of the membrane. The chain crosses the membrane as a helical span at residues 366–386 (VAFALLLCVIGFCMAGMFAVM). At 387–399 (PALIAERLYGPNL) the chain is on the cytoplasmic side. A helical transmembrane segment spans residues 400 to 420 (GFYMGAVFLAGVVGGFSAPPI). Over 421–434 (QAELQQRHYGNYTY) the chain is Extracellular. An N-linked (GlcNAc...) asparagine glycan is attached at asparagine 431. The chain crosses the membrane as a helical span at residues 435–455 (VCVFMSACMTLAAAVCYITMW). At 456 to 472 (RDKRVRIVSAAAEAKLA) the chain is on the cytoplasmic side.

It belongs to the major facilitator superfamily. RibJ family.

Its subcellular location is the cell membrane. In terms of biological role, transporter involved in riboflavin (vitamin B2) uptake. Also transports FMN and FAD. The protein is Riboflavin transporter RibJ of Trypanosoma cruzi (strain CL Brener).